The primary structure comprises 142 residues: Hemoglobin subunit beta (142 aa).

The Globin domain maps to 3–142 (KLSEDQEHYI…VAEALSSNYH (140 aa)). Heme b-binding residues include H60 and H89.

It belongs to the globin family. In terms of assembly, heterotetramer of two alpha chains and two beta chains. In terms of tissue distribution, red blood cells.

Its function is as follows. Involved in oxygen transport from gills to the various peripheral tissues. The polypeptide is Hemoglobin subunit beta (HBB) (Hemitrygon akajei (Red stingray)).